A 429-amino-acid chain; its full sequence is MKKQRNLRSMAAQAVEQVVEQGQSLSNILPPLQQKVSDKDKALLQELCFGVLRTLSQLDWLINKLMARPMTGKQRTVHYLIMVGLYQLLYTRIPPHAALAETVEGAIAIKRPQLKGLINGVLRQFQRQQEELLAEFNASDARYLHPSWLLKRLQKAYPEQWQSIVEANNQRPPMWLRVNRTHHSRDRWLALLDEAGMKGFPHADYPDAVRLETPAPVHALPGFEDGWVTVQDASAQGCMTWLAPQNGEHILDLCAAPGGKTTHILEVAPEAQVVAVDIDEQRLSRVYDNLKRLGMKATVKQGDGRYPSQWCGEQQFDRILLDAPCSATGVIRRHPDIKWLRRDRDIPELAQLQSEILDAIWPHLKSGGTLVYATCSVLPEENSLQIKAFLQRTADAELCETGTPEQPGKQNLPGAEEGDGFFYAKLIKK.

S-adenosyl-L-methionine contacts are provided by residues 254–260 (CAAPGGK), Asp277, Asp303, and Asp322. Residue Cys375 is the Nucleophile of the active site.

It belongs to the class I-like SAM-binding methyltransferase superfamily. RsmB/NOP family.

Its subcellular location is the cytoplasm. The catalysed reaction is cytidine(967) in 16S rRNA + S-adenosyl-L-methionine = 5-methylcytidine(967) in 16S rRNA + S-adenosyl-L-homocysteine + H(+). In terms of biological role, specifically methylates the cytosine at position 967 (m5C967) of 16S rRNA. The protein is Ribosomal RNA small subunit methyltransferase B of Escherichia coli (strain SMS-3-5 / SECEC).